The chain runs to 387 residues: Zinc finger protein neuro-d4 (387 aa).

Residues Lys106, Lys129, and Lys133 each participate in a glycyl lysine isopeptide (Lys-Gly) (interchain with G-Cter in SUMO2) cross-link. The segment at Tyr195–His218 adopts a C2H2-type zinc-finger fold. 2 consecutive PHD-type zinc fingers follow at residues Asn271–Cys328 and Cys325–His375. Zn(2+) is bound by residues Cys274, Cys277, Cys293, Cys296, His301, Cys304, Cys322, Cys325, Cys328, Cys331, Cys343, Cys346, His351, Cys354, Cys369, and Cys372.

It belongs to the requiem/DPF family. Component of neuron-specific chromatin remodeling complex (nBAF complex) composed of at least, ARID1A/BAF250A or ARID1B/BAF250B, SMARCD1/BAF60A, SMARCD3/BAF60C, SMARCA2/BRM/BAF190B, SMARCA4/BRG1/BAF190A, SMARCB1/BAF47, SMARCC1/BAF155, SMARCE1/BAF57, SMARCC2/BAF170, DPF1/BAF45B, DPF3/BAF45C, ACTL6B/BAF53B and actin.

The protein localises to the cytoplasm. Its subcellular location is the nucleus. May have an important role in developing neurons by participating in regulation of cell survival, possibly as a neurospecific transcription factor. Belongs to the neuron-specific chromatin remodeling complex (nBAF complex). During neural development a switch from a stem/progenitor to a postmitotic chromatin remodeling mechanism occurs as neurons exit the cell cycle and become committed to their adult state. The transition from proliferating neural stem/progenitor cells to postmitotic neurons requires a switch in subunit composition of the npBAF and nBAF complexes. As neural progenitors exit mitosis and differentiate into neurons, npBAF complexes which contain ACTL6A/BAF53A and PHF10/BAF45A, are exchanged for homologous alternative ACTL6B/BAF53B and DPF1/BAF45B or DPF3/BAF45C subunits in neuron-specific complexes (nBAF). The npBAF complex is essential for the self-renewal/proliferative capacity of the multipotent neural stem cells. The nBAF complex along with CREST plays a role regulating the activity of genes essential for dendrite growth. This Homo sapiens (Human) protein is Zinc finger protein neuro-d4.